A 143-amino-acid polypeptide reads, in one-letter code: Putative cytokinin riboside 5'-monophosphate phosphoribohydrolase LOG9 (143 aa).

Substrate contacts are provided by residues 23–24 (RK), 41–47 (RYETMEE), and Thr-53.

It belongs to the LOG family.

It carries out the reaction N(6)-(dimethylallyl)adenosine 5'-phosphate + H2O = N(6)-dimethylallyladenine + D-ribose 5-phosphate. The enzyme catalyses 9-ribosyl-trans-zeatin 5'-phosphate + H2O = trans-zeatin + D-ribose 5-phosphate. Cytokinin-activating enzyme working in the direct activation pathway. Phosphoribohydrolase that converts inactive cytokinin nucleotides to the biologically active free-base forms. The sequence is that of Putative cytokinin riboside 5'-monophosphate phosphoribohydrolase LOG9 (LOG9) from Arabidopsis thaliana (Mouse-ear cress).